The sequence spans 261 residues: Pantothenate synthetase (261 aa).

29-36 is an ATP binding site; sequence MGALHNGH. H36 serves as the catalytic Proton donor. Position 60 (Q60) interacts with (R)-pantoate. Q60 contributes to the beta-alanine binding site. 147 to 150 lines the ATP pocket; sequence GEKD. Q153 contacts (R)-pantoate. Position 184-187 (184-187) interacts with ATP; the sequence is LSSR.

It belongs to the pantothenate synthetase family. Homodimer.

It is found in the cytoplasm. It carries out the reaction (R)-pantoate + beta-alanine + ATP = (R)-pantothenate + AMP + diphosphate + H(+). It functions in the pathway cofactor biosynthesis; (R)-pantothenate biosynthesis; (R)-pantothenate from (R)-pantoate and beta-alanine: step 1/1. Its function is as follows. Catalyzes the condensation of pantoate with beta-alanine in an ATP-dependent reaction via a pantoyl-adenylate intermediate. The sequence is that of Pantothenate synthetase from Francisella tularensis subsp. novicida (strain U112).